We begin with the raw amino-acid sequence, 395 residues long: Argininosuccinate synthase (395 aa).

Residues 9 to 17 (AYSGGLDTS) and Ala-37 contribute to the ATP site. L-citrulline is bound by residues Tyr-87 and Ser-92. An ATP-binding site is contributed by Gly-117. Residues Thr-119, Asn-123, and Asp-124 each coordinate L-aspartate. Asn-123 provides a ligand contact to L-citrulline. 5 residues coordinate L-citrulline: Arg-127, Ser-173, Ser-182, Glu-258, and Tyr-270.

The protein belongs to the argininosuccinate synthase family. Type 1 subfamily. Homotetramer.

It localises to the cytoplasm. It catalyses the reaction L-citrulline + L-aspartate + ATP = 2-(N(omega)-L-arginino)succinate + AMP + diphosphate + H(+). It functions in the pathway amino-acid biosynthesis; L-arginine biosynthesis; L-arginine from L-ornithine and carbamoyl phosphate: step 2/3. This Methanospirillum hungatei JF-1 (strain ATCC 27890 / DSM 864 / NBRC 100397 / JF-1) protein is Argininosuccinate synthase.